Consider the following 65-residue polypeptide: Kassorin-M (65 aa).

A signal peptide spans 1 to 22 (MLTLKKSMLLLFFLGMVSFSLA). The propeptide occupies 23–51 (DDKREDEAEEGEDKRADEGEEKRAAEKKR). The segment at 24–45 (DKREDEAEEGEDKRADEGEEKR) is disordered. At leucine 64 the chain carries Leucine amide.

Belongs to the frog skin active peptide (FSAP) family. Brevinin subfamily. As to expression, expressed by the skin glands.

Its subcellular location is the secreted. In terms of biological role, induces contraction of smooth muscle in isolated guinea pig urinary bladder (EC50=4.66 nM). Has no antimicrobial activity against the Gram-positive bacterium S.aureus, the Gram-negative bacterium E.coli and the yeast C.albicans. Elicits histamine release from rat peritoneal mast cells. The chain is Kassorin-M from Phlyctimantis maculatus (Red-legged running frog).